The sequence spans 309 residues: Aspartate carbamoyltransferase catalytic subunit (309 aa).

Carbamoyl phosphate is bound by residues R57 and T58. K86 serves as a coordination point for L-aspartate. 3 residues coordinate carbamoyl phosphate: R107, H135, and Q138. L-aspartate contacts are provided by R168 and R229. Carbamoyl phosphate contacts are provided by L269 and P270.

Belongs to the aspartate/ornithine carbamoyltransferase superfamily. ATCase family. As to quaternary structure, heterooligomer of catalytic and regulatory chains.

It catalyses the reaction carbamoyl phosphate + L-aspartate = N-carbamoyl-L-aspartate + phosphate + H(+). Its pathway is pyrimidine metabolism; UMP biosynthesis via de novo pathway; (S)-dihydroorotate from bicarbonate: step 2/3. Its function is as follows. Catalyzes the condensation of carbamoyl phosphate and aspartate to form carbamoyl aspartate and inorganic phosphate, the committed step in the de novo pyrimidine nucleotide biosynthesis pathway. In Methanopyrus kandleri (strain AV19 / DSM 6324 / JCM 9639 / NBRC 100938), this protein is Aspartate carbamoyltransferase catalytic subunit.